The primary structure comprises 159 residues: Putative viral CXC chemokine 2 (159 aa).

2 cysteine pairs are disulfide-bonded: C50–C77 and C52–C93.

It belongs to the intercrine alpha (chemokine CxC) family.

This is Putative viral CXC chemokine 2 (UL147) from Human cytomegalovirus (strain Towne) (HHV-5).